Consider the following 84-residue polypeptide: Cell division topological specificity factor (84 aa).

The protein belongs to the MinE family.

Functionally, prevents the cell division inhibition by proteins MinC and MinD at internal division sites while permitting inhibition at polar sites. This ensures cell division at the proper site by restricting the formation of a division septum at the midpoint of the long axis of the cell. The protein is Cell division topological specificity factor of Burkholderia mallei (strain NCTC 10247).